A 200-amino-acid polypeptide reads, in one-letter code: MFSGIIQELGEVCFFEAQGNGLSLGIKSTPLFVTPLVTGDSVAVDGVCLTLTSCNESKIFFDVIPETLACTTLGEKRCSDQVNLEAALKMGDSIGGHLLSGHVFGTAEIFLIKENRYYFRGSKELSQYLFEKGFIAIDGISLTLVSVDSDTFSVGLIPETLQRTTLGKKREGERVNIEIDMSTKIQVDTVKRILASSGKD.

Lumazine-binding repeat units follow at residues 1–97 and 98–190; these read MFSG…IGGH and LLSG…VDTV. 2,4-dihydroxypteridine contacts are provided by residues 4-6, 48-50, 62-67, 101-103, Lys-132, 141-143, and 155-160; these read GII, CLT, DVIPET, GHV, SLT, and GLIPET.

In terms of assembly, homotrimer.

The catalysed reaction is 2 6,7-dimethyl-8-(1-D-ribityl)lumazine + H(+) = 5-amino-6-(D-ribitylamino)uracil + riboflavin. Its pathway is cofactor biosynthesis; riboflavin biosynthesis; riboflavin from 2-hydroxy-3-oxobutyl phosphate and 5-amino-6-(D-ribitylamino)uracil: step 2/2. Catalyzes the dismutation of two molecules of 6,7-dimethyl-8-ribityllumazine, resulting in the formation of riboflavin and 5-amino-6-(D-ribitylamino)uracil. The sequence is that of Riboflavin synthase (ribE) from Chlamydia pneumoniae (Chlamydophila pneumoniae).